Reading from the N-terminus, the 192-residue chain is uncharacterized protein (192 aa).

An N-terminal signal peptide occupies residues 1-18 (MNSKFILKYFILAFFLVS). Cysteine 19 is lipidated: N-palmitoyl cysteine. The S-diacylglycerol cysteine moiety is linked to residue cysteine 19.

It is found in the cell membrane. This is an uncharacterized protein from Borreliella burgdorferi (strain ATCC 35210 / DSM 4680 / CIP 102532 / B31) (Borrelia burgdorferi).